Reading from the N-terminus, the 123-residue chain is UPF0382 membrane protein YwdK (123 aa).

Transmembrane regions (helical) follow at residues 3-23 (VFII…AFGA), 49-69 (ALGL…GSVT), 71-91 (AGWL…ILSV), and 96-116 (ILGA…IMIV).

It belongs to the UPF0382 family.

It is found in the cell membrane. This chain is UPF0382 membrane protein YwdK (ywdK), found in Bacillus subtilis (strain 168).